The primary structure comprises 561 residues: Oligo-1,6-glucosidase 1 (561 aa).

Positions 20, 22, 24, 26, and 28 each coordinate Ca(2+). The active-site Nucleophile is aspartate 199. Catalysis depends on glutamate 255, which acts as the Proton donor.

Belongs to the glycosyl hydrolase 13 family.

Its subcellular location is the cytoplasm. The enzyme catalyses Hydrolysis of (1-&gt;6)-alpha-D-glucosidic linkages in some oligosaccharides produced from starch and glycogen by alpha-amylase, and in isomaltose.. Functionally, hydrolyzes various disaccharides such as sucrose, maltose, and isomaltose with different efficiencies. Also hydrolyzes longer maltodextrins from maltotriose up to maltohexaose, but not maltoheptaose, palatinose, isomaltotriose, or isomaltotetraose. The chain is Oligo-1,6-glucosidase 1 (malL) from Bacillus subtilis (strain 168).